Consider the following 114-residue polypeptide: Putative neurotoxin 7 (114 aa).

It belongs to the scolopendra neurotoxin 8 family. In terms of processing, contains 3 disulfide bonds. Expressed by the venom gland.

Its subcellular location is the secreted. In Scolopendra mutilans (Chinese red-headed centipede), this protein is Putative neurotoxin 7.